We begin with the raw amino-acid sequence, 384 residues long: Probable L-aspartate decarboxylase (384 aa).

Residue Lys233 is modified to N6-(pyridoxal phosphate)lysine.

It belongs to the group II decarboxylase family. MfnA subfamily. Requires pyridoxal 5'-phosphate as cofactor.

It catalyses the reaction L-aspartate + H(+) = beta-alanine + CO2. It functions in the pathway cofactor biosynthesis; coenzyme A biosynthesis. Its function is as follows. Catalyzes the decarboxylation of L-aspartate to produce beta-alanine. This chain is Probable L-aspartate decarboxylase, found in Pyrococcus abyssi (strain GE5 / Orsay).